We begin with the raw amino-acid sequence, 442 residues long: uncharacterized protein (442 aa).

Cysteine 43, cysteine 49, cysteine 52, and cysteine 130 together coordinate [4Fe-4S] cluster. Positions 273, 302, 323, and 372 each coordinate S-adenosyl-L-methionine. Cysteine 399 (nucleophile) is an active-site residue.

This sequence belongs to the class I-like SAM-binding methyltransferase superfamily. RNA M5U methyltransferase family.

This is an uncharacterized protein from Protochlamydia amoebophila (strain UWE25).